Reading from the N-terminus, the 417-residue chain is Probable tubulin polyglutamylase ttll-9 (417 aa).

The TTL domain occupies Gln-23–Glu-372. ATP contacts are provided by residues Gln-188–Val-191, Lys-201, and Asp-203.

It belongs to the tubulin--tyrosine ligase family. Expressed in head sensory neurons.

Polyglutamylase that forms polyglutamate side chains on tubulin. Acts when complexed with other proteins. Appears to be dispensable for polar spindle formation in dividing embryonic cells, for cilia-dependent osmotic avoidance and for male mating behavior. Probably by regulating microtubule stability via the glutamylation of tubulin, regulates PLM axon developmental growth. This is Probable tubulin polyglutamylase ttll-9 from Caenorhabditis elegans.